The primary structure comprises 196 residues: Small ribosomal subunit protein uS4c (196 aa).

The interval 17 to 36 (ALPGLTRKTPKSGSNLKKKF) is disordered. One can recognise an S4 RNA-binding domain in the interval 89–150 (MRLDNILFRL…NQRSKRLIQN (62 aa)).

It belongs to the universal ribosomal protein uS4 family. As to quaternary structure, part of the 30S ribosomal subunit. Contacts protein S5. The interaction surface between S4 and S5 is involved in control of translational fidelity.

The protein localises to the plastid. Its subcellular location is the chloroplast. Functionally, one of the primary rRNA binding proteins, it binds directly to 16S rRNA where it nucleates assembly of the body of the 30S subunit. In terms of biological role, with S5 and S12 plays an important role in translational accuracy. The polypeptide is Small ribosomal subunit protein uS4c (rps4) (Phyllostachys flexuosa (Drooping timber bamboo)).